The following is a 130-amino-acid chain: Capsid protein (130 aa).

The tract at residues 31–104 (EWLSNNSRSQ…FAATDDVTVI (74 aa)) is viral RNA-binding.

It belongs to the Leviviricetes capsid protein family. Homodimer. The capsid proteins form dimers that assemble by group of 5. Twelve such pentamers are linked together with free dimers. The homodimers binds to the viral RNA via an operator hairpin, but also to many other RNA sequences in the viral genome; this interaction probably shifts the virus from the replicative to the assembly phase and ensures specific encapsidation of the viral genome.

It localises to the virion. Its function is as follows. Capsid protein self-assembles to form an icosahedral capsid with a T=3 symmetry, about 26 nm in diameter, and consisting of 89 capsid proteins dimers (178 capsid proteins). Involved in viral genome encapsidation through the interaction between a capsid protein dimer and the multiple packaging signals present in the RNA genome. The capsid also contains 1 copy of the A2 maturation protein. Acts as a translational repressor of viral replicase synthesis late in infection. This latter function is the result of capsid protein interaction with an RNA hairpin which contains the replicase ribosome-binding site. The chain is Capsid protein from Escherichia coli (Bacteriophage JP34).